The sequence spans 238 residues: Uroporphyrinogen-III C-methyltransferase (238 aa).

S-adenosyl-L-homocysteine-binding positions include Pro11, 87–89 (GGD), 117–118 (TS), and Met170.

The protein belongs to the precorrin methyltransferase family. Monomer.

The enzyme catalyses uroporphyrinogen III + 2 S-adenosyl-L-methionine = precorrin-2 + 2 S-adenosyl-L-homocysteine + H(+). It participates in cofactor biosynthesis; adenosylcobalamin biosynthesis; precorrin-2 from uroporphyrinogen III: step 1/1. The protein operates within porphyrin-containing compound metabolism; siroheme biosynthesis; precorrin-2 from uroporphyrinogen III: step 1/1. SUMT exhibits a substrate inhibition phenomenon at uroporphyrinogen III concentrations above 0.5 uM; this property might play a regulatory role in cobalamin biosynthesis. Its function is as follows. Catalyzes the two successive C-2 and C-7 methylation reactions involved in the conversion of uroporphyrinogen III to precorrin-2 via the intermediate formation of precorrin-1. It is a step in the biosynthesis of both cobalamin (vitamin B12) and siroheme. In Priestia megaterium (Bacillus megaterium), this protein is Uroporphyrinogen-III C-methyltransferase.